Here is a 126-residue protein sequence, read N- to C-terminus: Small ribosomal subunit protein uS12 (126 aa).

The segment at methionine 1 to aspartate 26 is disordered. Aspartate 89 is subject to 3-methylthioaspartic acid. A disordered region spans residues serine 101–lysine 126. Residues alanine 113–lysine 126 are compositionally biased toward basic residues.

The protein belongs to the universal ribosomal protein uS12 family. As to quaternary structure, part of the 30S ribosomal subunit. Contacts proteins S8 and S17. May interact with IF1 in the 30S initiation complex.

In terms of biological role, with S4 and S5 plays an important role in translational accuracy. Functionally, interacts with and stabilizes bases of the 16S rRNA that are involved in tRNA selection in the A site and with the mRNA backbone. Located at the interface of the 30S and 50S subunits, it traverses the body of the 30S subunit contacting proteins on the other side and probably holding the rRNA structure together. The combined cluster of proteins S8, S12 and S17 appears to hold together the shoulder and platform of the 30S subunit. This chain is Small ribosomal subunit protein uS12, found in Burkholderia pseudomallei (strain 1106a).